The chain runs to 172 residues: Protein GrpE (172 aa).

Positions methionine 1 to leucine 23 are disordered.

It belongs to the GrpE family. As to quaternary structure, homodimer.

The protein resides in the cytoplasm. Functionally, participates actively in the response to hyperosmotic and heat shock by preventing the aggregation of stress-denatured proteins, in association with DnaK and GrpE. It is the nucleotide exchange factor for DnaK and may function as a thermosensor. Unfolded proteins bind initially to DnaJ; upon interaction with the DnaJ-bound protein, DnaK hydrolyzes its bound ATP, resulting in the formation of a stable complex. GrpE releases ADP from DnaK; ATP binding to DnaK triggers the release of the substrate protein, thus completing the reaction cycle. Several rounds of ATP-dependent interactions between DnaJ, DnaK and GrpE are required for fully efficient folding. The polypeptide is Protein GrpE (Xanthomonas axonopodis pv. citri (strain 306)).